The sequence spans 462 residues: Ammonium transporter Rh type B (462 aa).

Residues 1–11 (MTDPSTNMRLK) are Cytoplasmic-facing. A helical membrane pass occupies residues 12 to 32 (LPITCFILQIILIILFGVLVQ). Topologically, residues 33-62 (YDEDTDAKKHHHGNHSESKSDIENDFYYRY) are extracellular. N-linked (GlcNAc...) asparagine glycosylation occurs at asparagine 46. A helical membrane pass occupies residues 63–83 (PSFQDVHVMIFVGFGFLMTFL). At 84-94 (QRYGFSSVGFN) the chain is on the cytoplasmic side. The helical transmembrane segment at 95–115 (FLIAAFSLQWATLMQGFFHGL) threads the bilayer. Residues 116-125 (HEGKIHIGVE) are Extracellular-facing. The helical transmembrane segment at 126-146 (SMINADFCTGSVLISFGAVLG) threads the bilayer. The Cytoplasmic segment spans residues 147 to 152 (KTSPVQ). The chain crosses the membrane as a helical span at residues 153 to 173 (LLFMAVFEVTLFAVNEFILLT). Residues 174–180 (LLGTKDA) lie on the Extracellular side of the membrane. Residues 181–201 (GGSMTIHTFGAYFGLMVTRIL) traverse the membrane as a helical segment. At 202–220 (YRPNLDKSKHKNCSVYHSD) the chain is on the cytoplasmic side. Residues 221–241 (LFAMIGTLYLWMFWPSFNSAV) traverse the membrane as a helical segment. Residues 242–302 (TEHGDPQHRT…VAAGTAGEMM (61 aa)) are Extracellular-facing. A helical transmembrane segment spans residues 303 to 323 (LTPFGSMIVGFLAGIISVLGF). The Cytoplasmic portion of the chain corresponds to 324–344 (KYLTPILENKLKIQDTCGIHN). Residues 345–365 (LHGMPGVLGAIVGAVTASLAS) traverse the membrane as a helical segment. At 366-395 (KEVYGEGLEKVFPDVASGKRTASDQGGVQA) the chain is on the extracellular side. The helical transmembrane segment at 396–416 (ISLAVTLGMALFGGLIVGFIL) threads the bilayer. Residues 417–462 (KLPIFGAPRDTTCFEDSLYWEVPGEEESHEDQLTTVKTEESDKLNS) are Cytoplasmic-facing. The tract at residues 441-462 (EEESHEDQLTTVKTEESDKLNS) is disordered. The span at 453–462 (KTEESDKLNS) shows a compositional bias: basic and acidic residues.

The protein belongs to the ammonium transporter (TC 2.A.49) family. Rh subfamily.

The protein localises to the basolateral cell membrane. It is found in the cytoplasmic vesicle membrane. In terms of biological role, functions as an ammonia transporter. May play a role in the elimination of ammonia in the gill. The sequence is that of Ammonium transporter Rh type B (rhbg) from Oryzias latipes (Japanese rice fish).